A 146-amino-acid chain; its full sequence is Large ribosomal subunit protein uL15 (146 aa).

Residues 1-61 form a disordered region; the sequence is MELNSLKPAA…GGQMPMHRRL (61 aa). Residues 30-39 are compositionally biased toward basic residues; it reads TATKGHKGQK.

Belongs to the universal ribosomal protein uL15 family. In terms of assembly, part of the 50S ribosomal subunit.

Functionally, binds to the 23S rRNA. The chain is Large ribosomal subunit protein uL15 from Geotalea uraniireducens (strain Rf4) (Geobacter uraniireducens).